Consider the following 626-residue polypeptide: tRNA uridine 5-carboxymethylaminomethyl modification enzyme MnmG (626 aa).

Residue 13–18 (GGGHAG) coordinates FAD. 273 to 287 (GPRYCPSIEDKIHRF) contributes to the NAD(+) binding site.

It belongs to the MnmG family. As to quaternary structure, homodimer. Heterotetramer of two MnmE and two MnmG subunits. The cofactor is FAD.

The protein resides in the cytoplasm. Functionally, NAD-binding protein involved in the addition of a carboxymethylaminomethyl (cmnm) group at the wobble position (U34) of certain tRNAs, forming tRNA-cmnm(5)s(2)U34. This Acinetobacter baumannii (strain SDF) protein is tRNA uridine 5-carboxymethylaminomethyl modification enzyme MnmG.